Here is a 315-residue protein sequence, read N- to C-terminus: Lamassu protein LmuA (315 aa).

Component of antiviral defense system Lamassu type I, composed of LmuA and LmuB. Expression of Lamassu type I in B.subtilis (strain BEST7003) confers resistance to phages phi3T, SpBeta and SPR. This chain is Lamassu protein LmuA, found in Bacillus sp. (strain NCIM 5461 / CCTCC AB 2011126 / NIO-1130).